Here is a 363-residue protein sequence, read N- to C-terminus: Histidinol-phosphate aminotransferase (363 aa).

Lys226 is modified (N6-(pyridoxal phosphate)lysine).

The protein belongs to the class-II pyridoxal-phosphate-dependent aminotransferase family. Histidinol-phosphate aminotransferase subfamily. In terms of assembly, homodimer. Pyridoxal 5'-phosphate serves as cofactor.

It carries out the reaction L-histidinol phosphate + 2-oxoglutarate = 3-(imidazol-4-yl)-2-oxopropyl phosphate + L-glutamate. The protein operates within amino-acid biosynthesis; L-histidine biosynthesis; L-histidine from 5-phospho-alpha-D-ribose 1-diphosphate: step 7/9. This Campylobacter lari (strain RM2100 / D67 / ATCC BAA-1060) protein is Histidinol-phosphate aminotransferase.